The sequence spans 393 residues: Chorismate synthase (393 aa).

NADP(+) is bound by residues Arg40 and Arg46. Residues 129 to 131 (RAS), 251 to 252 (QA), Gly301, 316 to 320 (KPIST), and Arg342 contribute to the FMN site.

This sequence belongs to the chorismate synthase family. Homotetramer. FMNH2 serves as cofactor.

It carries out the reaction 5-O-(1-carboxyvinyl)-3-phosphoshikimate = chorismate + phosphate. The protein operates within metabolic intermediate biosynthesis; chorismate biosynthesis; chorismate from D-erythrose 4-phosphate and phosphoenolpyruvate: step 7/7. Functionally, catalyzes the anti-1,4-elimination of the C-3 phosphate and the C-6 proR hydrogen from 5-enolpyruvylshikimate-3-phosphate (EPSP) to yield chorismate, which is the branch point compound that serves as the starting substrate for the three terminal pathways of aromatic amino acid biosynthesis. This reaction introduces a second double bond into the aromatic ring system. This Koribacter versatilis (strain Ellin345) protein is Chorismate synthase.